The primary structure comprises 344 residues: Galactinol synthase 1 (344 aa).

Residue Lys111 is part of the active site. Mn(2+)-binding residues include Asp127, Asp129, and His265.

It belongs to the glycosyltransferase 8 family. Galactosyltransferase subfamily. Requires a divalent metal cation as cofactor. In terms of tissue distribution, accumulates in mature seeds. Expressed in seedlings (axes and cotyledons), meristems, vascular tissues and emerging lateral roots. Present in abscission zones.

The protein localises to the cytoplasm. It catalyses the reaction myo-inositol + UDP-alpha-D-galactose = alpha-D-galactosyl-(1-&gt;3)-1D-myo-inositol + UDP + H(+). Functionally, galactinol synthase involved in the biosynthesis of raffinose family oligosaccharides (RFOs) that function as osmoprotectants. Promotes plant stress tolerance such as heat, chilling, salinity and methylviologen (MV), a superoxide radical generating drug, by mediating raffinose accumulation, an osmoprotective substance. The sequence is that of Galactinol synthase 1 (GOLS1) from Arabidopsis thaliana (Mouse-ear cress).